Here is a 425-residue protein sequence, read N- to C-terminus: 26S proteasome regulatory subunit 7 (425 aa).

208-215 (GPPGTGKT) is a binding site for ATP.

Belongs to the AAA ATPase family.

Its subcellular location is the cytoplasm. It is found in the nucleus. Its function is as follows. The 26S proteasome is involved in the ATP-dependent degradation of ubiquitinated proteins. The regulatory (or ATPase) complex confers ATP dependency and substrate specificity to the 26S complex. This chain is 26S proteasome regulatory subunit 7 (RPT1), found in Prunus persica (Peach).